Consider the following 51-residue polypeptide: Ovomucoid (51 aa).

The region spanning 3–51 (VDCSGYPKPACTLEYFPLCGSDNQTYANKCAFCNAVVEKNVTLRHLGKC) is the Kazal-like domain. 3 disulfides stabilise this stretch: Cys-5/Cys-35, Cys-13/Cys-32, and Cys-21/Cys-51. Asn-42 is a glycosylation site (N-linked (GlcNAc...) asparagine).

Its subcellular location is the secreted. This is Ovomucoid from Nothoprocta cinerascens (Brushland tinamou).